The chain runs to 391 residues: MLEPSNLKTTSGSEHRGAMSIQLLLFVDERPSSHEHIEQIQHYLNSLKPDYPYELQIIEIHEQPHLVEHFRLVAAPALVKVFPEPRQTLAGSNIVNQLKKWWPRWQLDLEESQTENTNNRQTEQTKAESLNSVGYSAELMKLSDEIFRLKKEKDELLQQLKFKDQVLAMLAHDLRSPLTAASIAVETLELTQKQEDTERRAQLREQLYHQARKQFRVMNRLITDILQASKTMTAQLSVYYHDLFLPVLCQDILDEYREIFKEKSLTLVKDIPQDIPTVYADEELIRQVIVNLLDNAIKYTPSGGKVTVSILHRTTQKVQVSICDTGPGIPEEKQERIFEGHFRLKRDQEKEGYGLGLSLCRKIIRTHYGQIWVDSVPDQGSCFHFTLPVCR.

Residues 169–391 (MLAHDLRSPL…CFHFTLPVCR (223 aa)) enclose the Histidine kinase domain. The residue at position 172 (His172) is a Phosphohistidine; by autocatalysis.

In terms of assembly, homooligomerizes. Interacts with KaiC. Participates in the KaiABC clock complex, whose core is composed of a KaiC homohexamer, 6 KaiB and up to 6 KaiA dimers. SasA and KaiB(fs) compete to bind to KaiC.

The enzyme catalyses ATP + protein L-histidine = ADP + protein N-phospho-L-histidine.. Member of the two-component regulatory system SasA/RpaA involved in genome-wide circadian gene expression. One of several clock output pathways. Participates in the Kai clock protein complex, the main circadian regulator in cyanobacteria, via its interaction with KaiC. KaiC enhances the autophosphorylation activity of SasA, which then transfers its phosphate group to RpaA to activate it. In addition to its output function, recruits fold-shifted KaiB (KaiB(fs)) to KaiC to cooperatively form the KaiB(6):KaiC(6) complex (independent of SasA kinase activity). Required for robustness of the circadian rhythm of gene expression and is involved in clock output, also required for adaptation to light/dark cycles. The protein is Adaptive-response sensory kinase SasA of Rippkaea orientalis (strain PCC 8801 / RF-1) (Cyanothece sp. (strain PCC 8801)).